An 89-amino-acid polypeptide reads, in one-letter code: HssA/B-like protein 15 (89 aa).

The protein belongs to the hssA/B family.

This Dictyostelium discoideum (Social amoeba) protein is HssA/B-like protein 15 (hssl15).